We begin with the raw amino-acid sequence, 63 residues long: MFHLVDFQVTIAEILIIIMKTFRVAIWNLDILISSIVRQLFKPLTKKNYSELDDEEPMELDYP.

Belongs to the coronaviruses accessory protein 6 family.

It localises to the host endoplasmic reticulum membrane. The protein localises to the host Golgi apparatus membrane. Could be a determinant of virus virulence. Seems to stimulate cellular DNA synthesis in vitro. This Bat coronavirus HKU3 (BtCoV) protein is ORF6 protein.